Consider the following 107-residue polypeptide: Somatoliberin (107 aa).

The signal sequence occupies residues 1–19 (MPLWVFFVILTLTNGSHCS). The propeptide occupies 20–30 (PSPSLPFRIRR). At L74 the chain carries Leucine amide. A propeptide spanning residues 77–107 (QVDSMWADHRQMSLESLLAALLQKHSRDSQG) is cleaved from the precursor.

The protein belongs to the glucagon family.

It localises to the secreted. GRF is released by the hypothalamus and acts on the adenohypophyse to stimulate the secretion of growth hormone. This Mesocricetus auratus (Golden hamster) protein is Somatoliberin (GHRH).